The following is a 669-amino-acid chain: Galactocerebrosidase (669 aa).

The signal sequence occupies residues 1-26 (MTAAAGSAGHAAVPLLLCALLVPGGA). Substrate contacts are provided by T93, W135, and N181. The Proton donor/acceptor role is filled by E182. Residue E258 is the Nucleophile of the active site. C271 and C378 are joined by a disulfide. An N-linked (GlcNAc...) asparagine glycan is attached at N363. R380 provides a ligand contact to substrate. N-linked (GlcNAc...) asparagine glycans are attached at residues N387, N543, and N586.

The protein belongs to the glycosyl hydrolase 59 family.

The protein localises to the lysosome. The enzyme catalyses a beta-D-galactosyl-(1&lt;-&gt;1')-N-acylsphing-4-enine + H2O = an N-acylsphing-4-enine + D-galactose. It carries out the reaction beta-D-galactosyl-(1&lt;-&gt;1)-sphing-4-enine + H2O = sphing-4-enine + D-galactose. It catalyses the reaction a D-galactosylceramide + H2O = an N-acyl-sphingoid base + D-galactose. Hydrolyzes the galactose ester bonds of glycolipids such as galactosylceramide and galactosylsphingosine. Enzyme with very low activity responsible for the lysosomal catabolism of galactosylceramide, a major lipid in myelin, kidney and epithelial cells of small intestine and colon. This chain is Galactocerebrosidase, found in Canis lupus familiaris (Dog).